We begin with the raw amino-acid sequence, 1241 residues long: Putative urea carboxylase (1241 aa).

Positions alanine 3–tyrosine 459 constitute a Biotin carboxylation domain. Positions 117 and 201 each coordinate ATP. The ATP-grasp domain occupies arginine 121–aspartate 321. Residues glutamate 1159 to arginine 1239 enclose the Biotinyl-binding domain. The residue at position 1202 (lysine 1202) is an N6-biotinyllysine.

The cofactor is biotin.

It catalyses the reaction urea + hydrogencarbonate + ATP = urea-1-carboxylate + ADP + phosphate + H(+). Involved in the utilization of lactams. Required for the conversion of exogenous 2-pyrrolidinone (gamma-butyrolactam) to endogenous gamma-amino-n-butyrate (GABA). This Emericella nidulans (strain FGSC A4 / ATCC 38163 / CBS 112.46 / NRRL 194 / M139) (Aspergillus nidulans) protein is Putative urea carboxylase (lamA).